The primary structure comprises 223 residues: Phage shock protein A homolog (223 aa).

Residues 29–185 (IDQALRDMRS…AGMEDRNKAM (157 aa)) are a coiled coil.

It belongs to the PspA/Vipp/IM30 family.

In Deinococcus radiodurans (strain ATCC 13939 / DSM 20539 / JCM 16871 / CCUG 27074 / LMG 4051 / NBRC 15346 / NCIMB 9279 / VKM B-1422 / R1), this protein is Phage shock protein A homolog.